Reading from the N-terminus, the 321-residue chain is Peroxidase 70 (321 aa).

The first 25 residues, 1–25, serve as a signal peptide directing secretion; it reads MASSSFTSLSVMVLLCLAAAAVASA. Pyrrolidone carboxylic acid is present on Gln26. Disulfide bonds link Cys36/Cys116, Cys69/Cys74, Cys122/Cys317, and Cys201/Cys226. His67 (proton acceptor) is an active-site residue. Positions 68, 71, 73, 75, and 77 each coordinate Ca(2+). Asn81 carries an N-linked (GlcNAc...) asparagine glycan. Position 164 (Pro164) interacts with substrate. Residue Asn172 is glycosylated (N-linked (GlcNAc...) asparagine). His194 lines the heme b pocket. Position 195 (Thr195) interacts with Ca(2+). An N-linked (GlcNAc...) asparagine glycan is attached at Asn210. The Ca(2+) site is built by Asp241, Thr244, and Asp249.

This sequence belongs to the peroxidase family. Classical plant (class III) peroxidase subfamily. The cofactor is heme b. Ca(2+) is required as a cofactor.

It is found in the secreted. The enzyme catalyses 2 a phenolic donor + H2O2 = 2 a phenolic radical donor + 2 H2O. Functionally, removal of H(2)O(2), oxidation of toxic reductants, biosynthesis and degradation of lignin, suberization, auxin catabolism, response to environmental stresses such as wounding, pathogen attack and oxidative stress. These functions might be dependent on each isozyme/isoform in each plant tissue. This is Peroxidase 70 (PER70) from Zea mays (Maize).